Reading from the N-terminus, the 402-residue chain is Arginine deiminase (402 aa).

C392 functions as the Amidino-cysteine intermediate in the catalytic mechanism.

Belongs to the arginine deiminase family.

It is found in the cytoplasm. It catalyses the reaction L-arginine + H2O = L-citrulline + NH4(+). It participates in amino-acid degradation; L-arginine degradation via ADI pathway; carbamoyl phosphate from L-arginine: step 1/2. This chain is Arginine deiminase (arcA), found in Mycobacterium bovis (strain ATCC BAA-935 / AF2122/97).